The sequence spans 231 residues: Small ribosomal subunit protein uS3 (231 aa).

A KH type-2 domain is found at 18–97 (VDEYLAKQFY…NPELNARVMA (80 aa)).

It belongs to the universal ribosomal protein uS3 family. In terms of assembly, part of the 30S ribosomal subunit.

Binds the lower part of the 30S subunit head. This is Small ribosomal subunit protein uS3 from Sulfolobus acidocaldarius (strain ATCC 33909 / DSM 639 / JCM 8929 / NBRC 15157 / NCIMB 11770).